A 446-amino-acid polypeptide reads, in one-letter code: GTPase Der (446 aa).

EngA-type G domains are found at residues Pro3–Gln168 and Ile181–Met354. GTP-binding positions include Gly9–Ser16, Asp57–Phe61, Asn120–Glu123, Gly187–Ser194, Asp234–Leu238, and Asn299–Asp302. The KH-like domain occupies Ser355–Thr439.

The protein belongs to the TRAFAC class TrmE-Era-EngA-EngB-Septin-like GTPase superfamily. EngA (Der) GTPase family. In terms of assembly, associates with the 50S ribosomal subunit.

Functionally, GTPase that plays an essential role in the late steps of ribosome biogenesis. The sequence is that of GTPase Der from Paraburkholderia phymatum (strain DSM 17167 / CIP 108236 / LMG 21445 / STM815) (Burkholderia phymatum).